A 147-amino-acid polypeptide reads, in one-letter code: MVHFTAEEKAAITSLWGKMNVEEAGGEALGRLLVVYPWTQRFFDNFGNLSSPSAILGNPKVKAHGKKVLTSFGDAIKNMDNLKTTFAKLSELHCDKLHVDPENFRLLGNVLVIILATHFGKEFTPEVQAAWQKLVSAVAIALGHKYH.

The 145-residue stretch at 3–147 (HFTAEEKAAI…VAIALGHKYH (145 aa)) folds into the Globin domain. 2 positions are modified to phosphoserine: Ser-14 and Ser-51. Positions 64 and 93 each coordinate heme b.

Belongs to the globin family. Heterotetramer of two alpha chains and two epsilon chains in early embryonic hemoglobin Gower-2; two zeta chains and two epsilon chains in early embryonic hemoglobin Gower-1. As to expression, red blood cells.

Its function is as follows. The epsilon chain is a beta-type chain of early mammalian embryonic hemoglobin. The chain is Hemoglobin subunit epsilon (HBE1) from Callithrix jacchus (White-tufted-ear marmoset).